Consider the following 42-residue polypeptide: Delta-hexatoxin-Hv1a (42 aa).

4 cysteine pairs are disulfide-bonded: C1-C15, C8-C20, C14-C31, and C16-C42.

It belongs to the neurotoxin 06 (delta-actx) family. In terms of tissue distribution, expressed by the venom gland.

It is found in the secreted. In terms of biological role, inhibits tetrodotoxin-sensitive voltage-gated sodium channels (Nav) by binding to site 3. Slows the inactivation, and causes a prolongation of action potential duration resulting in repetitive firing in autonomic and motor nerve fibers. Does not depolarize the resting potential. Does not affect tetrodotoxin-resistant sodium channels. This lethal neurotoxin is active on both insect and mammalian voltage-gated sodium channels. Pan-neuronal expression in Drosophila is lethal but flies engineered to express the toxin only in pacemaker neurons have profound defects in circadian rhythm but a normal lifespan. This chain is Delta-hexatoxin-Hv1a, found in Hadronyche versuta (Blue mountains funnel-web spider).